We begin with the raw amino-acid sequence, 153 residues long: Ribosome-binding factor A (153 aa).

A disordered region spans residues 116–153 (DAQVAEQAQGAQYAAGEDAYRTPSDEDDAEGPESAPRV). Positions 119–132 (VAEQAQGAQYAAGE) are enriched in low complexity.

It belongs to the RbfA family. In terms of assembly, monomer. Binds 30S ribosomal subunits, but not 50S ribosomal subunits or 70S ribosomes.

The protein resides in the cytoplasm. One of several proteins that assist in the late maturation steps of the functional core of the 30S ribosomal subunit. Associates with free 30S ribosomal subunits (but not with 30S subunits that are part of 70S ribosomes or polysomes). Required for efficient processing of 16S rRNA. May interact with the 5'-terminal helix region of 16S rRNA. This chain is Ribosome-binding factor A, found in Kocuria rhizophila (strain ATCC 9341 / DSM 348 / NBRC 103217 / DC2201).